The following is a 102-amino-acid chain: Small ribosomal subunit protein uS10 (102 aa).

This sequence belongs to the universal ribosomal protein uS10 family. As to quaternary structure, part of the 30S ribosomal subunit.

Its function is as follows. Involved in the binding of tRNA to the ribosomes. The sequence is that of Small ribosomal subunit protein uS10 from Roseiflexus sp. (strain RS-1).